A 476-amino-acid chain; its full sequence is NAC domain-containing protein 86 (476 aa).

The 152-residue stretch at 6–157 (LPPGFRFHPT…AYALCRVFKK (152 aa)) folds into the NAC domain. The DNA-binding element occupies 105–163 (IGTKKTLVYYRGRAPHGIRTGWVMHEYRLDESECEPSAFGMQDAYALCRVFKKIVIEAK).

Expressed in a few sieve element cells before enucleation and in phloem-pole pericycle cells.

Its subcellular location is the nucleus. Functionally, transcription factor directing sieve element enucleation and cytosol degradation. Not required for formation of lytic vacuoles. Regulates, with NAC045, the transcription of NEN1, NEN2, NEN3, NEN4, RTM1, RTM2, UBP16, PLDZETA, ABCB10 and At1g26450. In Arabidopsis thaliana (Mouse-ear cress), this protein is NAC domain-containing protein 86.